The primary structure comprises 400 residues: Large envelope protein (400 aa).

The residue at position 1 (Met1) is an N-acetylmethionine. Disordered regions lie at residues 1–24 (MGGW…PLGF) and 86–114 (TTVP…PLRD). Gly2 carries N-myristoyl glycine; by host lipidation. The interval 2 to 119 (GGWSSKPRKG…PPLRDTHPQA (118 aa)) is pre-S1. The interval 2 to 174 (GGWSSKPRKG…SSKTGDPVPN (173 aa)) is pre-S. The Virion surface; in external conformation portion of the chain corresponds to 2–181 (GGWSSKPRKG…VPNMENIASG (180 aa)). The Intravirion; in internal conformation segment spans residues 2 to 253 (GGWSSKPRKG…PGYRWMCLRR (252 aa)). Trp4 carries N-linked (GlcNAc...) asparagine glycosylation. Polar residues predominate over residues 96-106 (STNRQSGRQPT). Positions 120 to 174 (MQWNSTTFLQTLQDSRVRALYLPAGGSSSGTVSPAQNTVSAISSISSKTGDPVPN) are pre-S2. The chain crosses the membrane as a helical span at residues 182–202 (LLGHLLVLQAGFFSLTKILTI). The Intravirion; in external conformation portion of the chain corresponds to 203–253 (PQSLDSWWTSLNFLGGTPACPGQNSQSQISSHSPTCCPPICPGYRWMCLRR). A helical membrane pass occupies residues 254–274 (FIIFLCILLLCLIFLLVLLDY). The Virion surface portion of the chain corresponds to 275–348 (QGMLPVCPLT…WASVRFSWLS (74 aa)). Asn320 carries an N-linked (GlcNAc...) asparagine; by host glycan. Residues 349–369 (LLVPFVQWFVGLSPTVWLSVI) traverse the membrane as a helical segment. Over 370–375 (WMMWFW) the chain is Intravirion. Residues 376–398 (GPSLYNILRPFMPLLPTFFCLWV) traverse the membrane as a helical segment. Over 399 to 400 (YI) the chain is Virion surface.

This sequence belongs to the orthohepadnavirus major surface antigen family. As to quaternary structure, interacts (via its myristoylated pre-S1 region) with the host SLC10A1/NTCP; this interaction is essential for viral entry. In terms of assembly, in its internal form (Li-HBsAg), interacts with the capsid protein and with the isoform S. Interacts with host chaperone CANX. Associates with host chaperone CANX through its pre-S2 N glycan; this association may be essential for isoform M proper secretion. As to quaternary structure, interacts with isoform L. Interacts with the antigens of satellite virus HDV (HDVAgs); this interaction is required for encapsidation of HDV genomic RNA. Isoform M is N-terminally acetylated by host at a ratio of 90%, and N-glycosylated by host at the pre-S2 region. In terms of processing, myristoylated; this modification is essential for its interaction with the host protein SLC10A1/NTCP.

Its subcellular location is the virion membrane. Functionally, the large envelope protein exists in two topological conformations, one which is termed 'external' or Le-HBsAg and the other 'internal' or Li-HBsAg. In its external conformation the protein attaches the virus to cell receptors and thereby initiating infection. This interaction determines the species specificity and liver tropism. This attachment induces virion internalization predominantly through caveolin-mediated endocytosis. The large envelope protein also assures fusion between virion membrane and endosomal membrane. In its internal conformation the protein plays a role in virion morphogenesis and mediates the contact with the nucleocapsid like a matrix protein. In terms of biological role, the middle envelope protein plays an important role in the budding of the virion. It is involved in the induction of budding in a nucleocapsid independent way. In this process the majority of envelope proteins bud to form subviral lipoprotein particles of 22 nm of diameter that do not contain a nucleocapsid. The sequence is that of Large envelope protein from Hepatitis B virus genotype B2 subtype adw (isolate China/patient4/1996) (HBV-B).